The primary structure comprises 83 residues: Three-finger toxin W-IV (83 aa).

The signal sequence occupies residues 1–21 (MKTLLLTLVVVTIVCLDLGHT). 4 disulfides stabilise this stretch: Cys24–Cys45, Cys38–Cys62, Cys64–Cys75, and Cys76–Cys81.

This sequence belongs to the three-finger toxin family. Short-chain subfamily. Type I alpha-neurotoxin sub-subfamily. In terms of tissue distribution, expressed by the venom gland.

It is found in the secreted. Its function is as follows. Binds to muscle nicotinic acetylcholine receptor (nAChR) and inhibit acetylcholine from binding to the receptor, thereby impairing neuromuscular transmission. In Walterinnesia aegyptia (Desert black snake), this protein is Three-finger toxin W-IV.